The following is a 160-amino-acid chain: Endoribonuclease YbeY (160 aa).

H125, H129, and H135 together coordinate Zn(2+).

Belongs to the endoribonuclease YbeY family. Requires Zn(2+) as cofactor.

The protein resides in the cytoplasm. In terms of biological role, single strand-specific metallo-endoribonuclease involved in late-stage 70S ribosome quality control and in maturation of the 3' terminus of the 16S rRNA. This chain is Endoribonuclease YbeY, found in Leuconostoc citreum (strain KM20).